A 283-amino-acid chain; its full sequence is Pantothenate synthetase (283 aa).

31–38 (MGALHDGH) contacts ATP. The active-site Proton donor is His38. Gln62 is a binding site for (R)-pantoate. Gln62 serves as a coordination point for beta-alanine. 148–151 (GKKD) is a binding site for ATP. Gln154 contacts (R)-pantoate. ATP is bound by residues Ile177 and 185–188 (KSSR).

It belongs to the pantothenate synthetase family. Homodimer.

The protein resides in the cytoplasm. The enzyme catalyses (R)-pantoate + beta-alanine + ATP = (R)-pantothenate + AMP + diphosphate + H(+). Its pathway is cofactor biosynthesis; (R)-pantothenate biosynthesis; (R)-pantothenate from (R)-pantoate and beta-alanine: step 1/1. Functionally, catalyzes the condensation of pantoate with beta-alanine in an ATP-dependent reaction via a pantoyl-adenylate intermediate. The protein is Pantothenate synthetase of Oceanobacillus iheyensis (strain DSM 14371 / CIP 107618 / JCM 11309 / KCTC 3954 / HTE831).